The chain runs to 95 residues: Co-chaperonin GroES (95 aa).

This sequence belongs to the GroES chaperonin family. In terms of assembly, heptamer of 7 subunits arranged in a ring. Interacts with the chaperonin GroEL.

The protein localises to the cytoplasm. Together with the chaperonin GroEL, plays an essential role in assisting protein folding. The GroEL-GroES system forms a nano-cage that allows encapsulation of the non-native substrate proteins and provides a physical environment optimized to promote and accelerate protein folding. GroES binds to the apical surface of the GroEL ring, thereby capping the opening of the GroEL channel. The polypeptide is Co-chaperonin GroES (Francisella tularensis subsp. holarctica (strain FTNF002-00 / FTA)).